A 270-amino-acid chain; its full sequence is 4-hydroxy-tetrahydrodipicolinate reductase (270 aa).

NAD(+) is bound at residue 7-12; the sequence is GANGRM. Arginine 34 is an NADP(+) binding site. NAD(+)-binding positions include 97-99 and 121-124; these read GTT and SGNM. Histidine 155 (proton donor/acceptor) is an active-site residue. Residue histidine 156 participates in (S)-2,3,4,5-tetrahydrodipicolinate binding. Residue lysine 159 is the Proton donor of the active site. 165 to 166 lines the (S)-2,3,4,5-tetrahydrodipicolinate pocket; that stretch reads GT.

This sequence belongs to the DapB family.

The protein resides in the cytoplasm. It carries out the reaction (S)-2,3,4,5-tetrahydrodipicolinate + NAD(+) + H2O = (2S,4S)-4-hydroxy-2,3,4,5-tetrahydrodipicolinate + NADH + H(+). It catalyses the reaction (S)-2,3,4,5-tetrahydrodipicolinate + NADP(+) + H2O = (2S,4S)-4-hydroxy-2,3,4,5-tetrahydrodipicolinate + NADPH + H(+). The protein operates within amino-acid biosynthesis; L-lysine biosynthesis via DAP pathway; (S)-tetrahydrodipicolinate from L-aspartate: step 4/4. Functionally, catalyzes the conversion of 4-hydroxy-tetrahydrodipicolinate (HTPA) to tetrahydrodipicolinate. The protein is 4-hydroxy-tetrahydrodipicolinate reductase of Bartonella tribocorum (strain CIP 105476 / IBS 506).